The following is a 192-amino-acid chain: Adenylate kinase (192 aa).

An ATP-binding site is contributed by 12–17 (GSGKTT). The tract at residues 34-63 (STGDLLRAEVASGSELGKTIDSFISKGNLV) is NMP. Residues threonine 35, arginine 40, 61-63 (NLV), 88-91 (GYPR), and glutamine 95 each bind AMP. The tract at residues 130–136 (GRNRGAD) is LID. An ATP-binding site is contributed by arginine 131. Arginine 133 and arginine 145 together coordinate AMP. Arginine 173 provides a ligand contact to ATP.

It belongs to the adenylate kinase family. Monomer.

It is found in the cytoplasm. The catalysed reaction is AMP + ATP = 2 ADP. It participates in purine metabolism; AMP biosynthesis via salvage pathway; AMP from ADP: step 1/1. Functionally, catalyzes the reversible transfer of the terminal phosphate group between ATP and AMP. Plays an important role in cellular energy homeostasis and in adenine nucleotide metabolism. This Campylobacter jejuni subsp. jejuni serotype O:2 (strain ATCC 700819 / NCTC 11168) protein is Adenylate kinase.